The primary structure comprises 252 residues: Probable transcriptional regulatory protein Cagg_2594 (252 aa).

Basic residues predominate over residues 1–14; it reads MSGHSKWHTIRRAK. A disordered region spans residues 1–22; it reads MSGHSKWHTIRRAKSANDQRRG.

It belongs to the TACO1 family.

It is found in the cytoplasm. In Chloroflexus aggregans (strain MD-66 / DSM 9485), this protein is Probable transcriptional regulatory protein Cagg_2594.